Here is a 632-residue protein sequence, read N- to C-terminus: MQYPKNYDVVVIGGGHAGTEAALAAARMGAQTLLLTHNIETLGQMSCNPAIGGIGKSHLVREIDALGGAMALATDKSGIQFRVLNSRKGAAVRATRAQADRILYKAAIRHTLENQPNLDIFQQAADDILVENGRATAVVTATGIIFNTQTVVLTSGTFLGGVIHIGLESSKGGRAGDQPSIKLADRLRELKLPVGRLKTGTPARIDARSVDFSVMTVQPGDTPLPVMSYMGDVSMHPEQVNCYITHTNARTHDIIRENLDRSPMFSGKIEGVGPRYCPSIEDKIHRFADKDSHQIFIEPEGLTTHELYPNGISTSLPFDVQLEFIHSMKGLENAHITRPGYAIEYDYFDPQNLKPTLETKSIDRLYFAGQINGTTGYEEAGVQGLLAGTNAALVTCENNEFDVWTPRRDEAYLGVLVDDLITHGTTEPYRMFTSRAEYRLLLREDNADQRLTETGRKLGLVDDVRWQAYEEKMEAIASETARLKDMWATPANALGKKVTEQTGEVLSKEATAFDLLKRPQIHFADIAAITDSQVDAQVGEQIEISVKYAGYIDRQQEDIDQMKRLENTALPIDFDYSVVSGLSNEIVQKLAQVRPSTLAQAGRISGVTPAAIQLLAMTVKKQKKVKAALNAS.

An FAD-binding site is contributed by 13-18 (GGGHAG). 273-287 (GPRYCPSIEDKIHRF) contributes to the NAD(+) binding site.

It belongs to the MnmG family. In terms of assembly, homodimer. Heterotetramer of two MnmE and two MnmG subunits. It depends on FAD as a cofactor.

The protein resides in the cytoplasm. Functionally, NAD-binding protein involved in the addition of a carboxymethylaminomethyl (cmnm) group at the wobble position (U34) of certain tRNAs, forming tRNA-cmnm(5)s(2)U34. The chain is tRNA uridine 5-carboxymethylaminomethyl modification enzyme MnmG from Psychrobacter cryohalolentis (strain ATCC BAA-1226 / DSM 17306 / VKM B-2378 / K5).